A 347-amino-acid chain; its full sequence is Quinolinate synthase (347 aa).

Positions 47 and 68 each coordinate iminosuccinate. Cys-113 serves as a coordination point for [4Fe-4S] cluster. Residues 139-141 (YAN) and Ser-156 contribute to the iminosuccinate site. Cys-200 lines the [4Fe-4S] cluster pocket. Residues 226-228 (HPE) and Thr-243 contribute to the iminosuccinate site. Position 297 (Cys-297) interacts with [4Fe-4S] cluster.

Belongs to the quinolinate synthase family. Type 1 subfamily. [4Fe-4S] cluster serves as cofactor.

Its subcellular location is the cytoplasm. The enzyme catalyses iminosuccinate + dihydroxyacetone phosphate = quinolinate + phosphate + 2 H2O + H(+). It functions in the pathway cofactor biosynthesis; NAD(+) biosynthesis; quinolinate from iminoaspartate: step 1/1. Its function is as follows. Catalyzes the condensation of iminoaspartate with dihydroxyacetone phosphate to form quinolinate. The polypeptide is Quinolinate synthase (Escherichia coli (strain K12 / MC4100 / BW2952)).